Reading from the N-terminus, the 558-residue chain is Formate--tetrahydrofolate ligase (558 aa).

An ATP-binding site is contributed by 65–72 (TPAGEGKT).

This sequence belongs to the formate--tetrahydrofolate ligase family.

The catalysed reaction is (6S)-5,6,7,8-tetrahydrofolate + formate + ATP = (6R)-10-formyltetrahydrofolate + ADP + phosphate. It participates in one-carbon metabolism; tetrahydrofolate interconversion. The protein is Formate--tetrahydrofolate ligase of Methylobacterium nodulans (strain LMG 21967 / CNCM I-2342 / ORS 2060).